Here is a 490-residue protein sequence, read N- to C-terminus: Aspartyl/glutamyl-tRNA(Asn/Gln) amidotransferase subunit B (490 aa).

The protein belongs to the GatB/GatE family. GatB subfamily. As to quaternary structure, heterotrimer of A, B and C subunits.

It carries out the reaction L-glutamyl-tRNA(Gln) + L-glutamine + ATP + H2O = L-glutaminyl-tRNA(Gln) + L-glutamate + ADP + phosphate + H(+). It catalyses the reaction L-aspartyl-tRNA(Asn) + L-glutamine + ATP + H2O = L-asparaginyl-tRNA(Asn) + L-glutamate + ADP + phosphate + 2 H(+). Its function is as follows. Allows the formation of correctly charged Asn-tRNA(Asn) or Gln-tRNA(Gln) through the transamidation of misacylated Asp-tRNA(Asn) or Glu-tRNA(Gln) in organisms which lack either or both of asparaginyl-tRNA or glutaminyl-tRNA synthetases. The reaction takes place in the presence of glutamine and ATP through an activated phospho-Asp-tRNA(Asn) or phospho-Glu-tRNA(Gln). This is Aspartyl/glutamyl-tRNA(Asn/Gln) amidotransferase subunit B from Burkholderia vietnamiensis (strain G4 / LMG 22486) (Burkholderia cepacia (strain R1808)).